Consider the following 228-residue polypeptide: NAD(P)H-hydrate epimerase (228 aa).

The region spanning 9–209 (VRAVERLAHR…LLGLTPAFLA (201 aa)) is the YjeF N-terminal domain. 53–57 (NNGGD) is a (6S)-NADPHX binding site. Positions 54 and 115 each coordinate K(+). (6S)-NADPHX-binding positions include 119–125 (GIGLARP) and aspartate 148. A K(+)-binding site is contributed by serine 151.

It belongs to the NnrE/AIBP family. K(+) is required as a cofactor.

It catalyses the reaction (6R)-NADHX = (6S)-NADHX. It carries out the reaction (6R)-NADPHX = (6S)-NADPHX. Functionally, catalyzes the epimerization of the S- and R-forms of NAD(P)HX, a damaged form of NAD(P)H that is a result of enzymatic or heat-dependent hydration. This is a prerequisite for the S-specific NAD(P)H-hydrate dehydratase to allow the repair of both epimers of NAD(P)HX. This Bordetella parapertussis (strain 12822 / ATCC BAA-587 / NCTC 13253) protein is NAD(P)H-hydrate epimerase.